Consider the following 438-residue polypeptide: Adenylosuccinate synthetase (438 aa).

GTP-binding positions include 13 to 19 (GDEGKGK) and 41 to 43 (GHT). Asp14 functions as the Proton acceptor in the catalytic mechanism. 2 residues coordinate Mg(2+): Asp14 and Gly41. IMP is bound by residues 14-17 (DEGK), 39-42 (NAGH), Thr130, Arg144, Gln225, Thr240, and Arg310. The Proton donor role is filled by His42. Residue 306 to 312 (ATTGRLR) participates in substrate binding. GTP-binding positions include Arg312, 338 to 340 (KLD), and 421 to 423 (STG).

The protein belongs to the adenylosuccinate synthetase family. As to quaternary structure, homodimer. Mg(2+) is required as a cofactor.

Its subcellular location is the cytoplasm. The enzyme catalyses IMP + L-aspartate + GTP = N(6)-(1,2-dicarboxyethyl)-AMP + GDP + phosphate + 2 H(+). The protein operates within purine metabolism; AMP biosynthesis via de novo pathway; AMP from IMP: step 1/2. Functionally, plays an important role in the de novo pathway of purine nucleotide biosynthesis. Catalyzes the first committed step in the biosynthesis of AMP from IMP. This chain is Adenylosuccinate synthetase, found in Aliivibrio fischeri (strain ATCC 700601 / ES114) (Vibrio fischeri).